A 91-amino-acid polypeptide reads, in one-letter code: MTRSAKKGPFIDAHLLKKVEAAAGGKDKKPIKTWSRRSTILPDFIGLTIAVHNGRQHVPVYVTENMVGHKLGEFALTRTFKGHAADKKAKR.

Belongs to the universal ribosomal protein uS19 family.

Protein S19 forms a complex with S13 that binds strongly to the 16S ribosomal RNA. This Ralstonia nicotianae (strain ATCC BAA-1114 / GMI1000) (Ralstonia solanacearum) protein is Small ribosomal subunit protein uS19.